The following is a 125-amino-acid chain: Small ribosomal subunit protein uS12 (125 aa).

The residue at position 89 (aspartate 89) is a 3-methylthioaspartic acid.

This sequence belongs to the universal ribosomal protein uS12 family. As to quaternary structure, part of the 30S ribosomal subunit. Contacts proteins S8 and S17. May interact with IF1 in the 30S initiation complex.

In terms of biological role, with S4 and S5 plays an important role in translational accuracy. Functionally, interacts with and stabilizes bases of the 16S rRNA that are involved in tRNA selection in the A site and with the mRNA backbone. Located at the interface of the 30S and 50S subunits, it traverses the body of the 30S subunit contacting proteins on the other side and probably holding the rRNA structure together. The combined cluster of proteins S8, S12 and S17 appears to hold together the shoulder and platform of the 30S subunit. The chain is Small ribosomal subunit protein uS12 from Acidovorax sp. (strain JS42).